The primary structure comprises 368 residues: Phosphoserine aminotransferase (368 aa).

Arg-44 contributes to the L-glutamate binding site. Pyridoxal 5'-phosphate contacts are provided by residues 78-79, Trp-104, Thr-157, Asp-179, and Gln-202; that span reads AT. Lys-203 is subject to N6-(pyridoxal phosphate)lysine. A pyridoxal 5'-phosphate-binding site is contributed by 244-245; that stretch reads NT.

This sequence belongs to the class-V pyridoxal-phosphate-dependent aminotransferase family. SerC subfamily. As to quaternary structure, homodimer. Pyridoxal 5'-phosphate serves as cofactor.

It localises to the cytoplasm. It catalyses the reaction O-phospho-L-serine + 2-oxoglutarate = 3-phosphooxypyruvate + L-glutamate. The enzyme catalyses 4-(phosphooxy)-L-threonine + 2-oxoglutarate = (R)-3-hydroxy-2-oxo-4-phosphooxybutanoate + L-glutamate. It participates in amino-acid biosynthesis; L-serine biosynthesis; L-serine from 3-phospho-D-glycerate: step 2/3. The protein operates within cofactor biosynthesis; pyridoxine 5'-phosphate biosynthesis; pyridoxine 5'-phosphate from D-erythrose 4-phosphate: step 3/5. In terms of biological role, catalyzes the reversible conversion of 3-phosphohydroxypyruvate to phosphoserine and of 3-hydroxy-2-oxo-4-phosphonooxybutanoate to phosphohydroxythreonine. This chain is Phosphoserine aminotransferase, found in Neisseria meningitidis serogroup B (strain ATCC BAA-335 / MC58).